The primary structure comprises 662 residues: MPLRDKYCQTDHHHHGCCEPVYILEPGDPPLLQQPVQTSKSGIQQIIECFRSGTKQLKHILLKDVDTIFECKLCRSLFRGLPNLITHKKFYCPPSLQMDDNLPDVNDKQSQAISDLLEAIYPRVDKREYIIKLEPIETNQNAVFQYISRTDNPAEVTESSSTPEQTEVQIQETSSEQLKAVPDADTEVEEAIEPPSIETVVDEAAAPTEEQPQESQADLETSDSSDLGHQLICCLCRKEFNSRRGVRRHIRKVHKKKMEELKKYIETRKTPNQSSKGRSKSVLVSLSRSCPVCCKSFATKANVRRHFDEVHRGLRRDSITPDIATKPGQPLFLDSASPKKSFKTRKQKSSKAEYNLTACKCLLCKRKYSSQIMLKRHMQIVHKITLSGANSKREKGPNNTANSSEVKVELADSVESSPPSITHSPQNELKGTNHSNEKKNTPATQKNKVKQDSESPKSASPSAAGGQQKTRKPKLSAGFDFKQLYCKLCKRQFTSKQNLTKHIELHTDGNNIYVKFYKCPLCTYETRRKRDVIRHITVVHKKSSRYLGKITASLEIRAIKKPIDFVLNKVAKRGPSREEAKHNDSKQDGTSNSPSKKYEVADVGIEVKVTKNFSLHRCNKCGKAFAKKTYLEHHKKTHKANATNSPEGNKTKGRSTRSKALV.

The C2H2-type 1; degenerate zinc finger occupies Phe-69 to Tyr-91. Lys-132 is covalently cross-linked (Glycyl lysine isopeptide (Lys-Gly) (interchain with G-Cter in SUMO2)). 2 disordered regions span residues Glu-172–Ile-197 and Ala-205–Ser-224. Over residues Ala-205 to Gln-216 the composition is skewed to low complexity. Residues Leu-231–His-254 form a C2H2-type 2 zinc finger. Residue Lys-280 forms a Glycyl lysine isopeptide (Lys-Gly) (interchain with G-Cter in SUMO2) linkage. A C2H2-type 3 zinc finger spans residues Arg-288–His-311. Phosphoserine is present on Ser-318. The tract at residues Ile-319–Ser-349 is disordered. Position 320 is a phosphothreonine (Thr-320). Ser-337 is modified (phosphoserine). Residues Lys-340–Ser-349 are compositionally biased toward basic residues. Residues Thr-357–His-382 form a C2H2-type 4 zinc finger. The interval Ala-389–Pro-473 is disordered. Residue Lys-392 forms a Glycyl lysine isopeptide (Lys-Gly) (interchain with G-Cter in SUMO2) linkage. A compositionally biased stretch (polar residues) spans Val-414–His-434. Phosphoserine occurs at positions 420, 424, 453, 455, 458, and 460. The segment covering Pro-456–Gln-468 has biased composition (low complexity). A Glycyl lysine isopeptide (Lys-Gly) (interchain with G-Cter in SUMO2) cross-link involves residue Lys-474. C2H2-type zinc fingers lie at residues Leu-484 to His-506 and Tyr-517 to His-540. Disordered stretches follow at residues Arg-573–Lys-597 and His-633–Val-662. The segment covering Pro-575–Gln-587 has biased composition (basic and acidic residues). Lys-597 is covalently cross-linked (Glycyl lysine isopeptide (Lys-Gly) (interchain with G-Cter in SUMO2)). The C2H2-type 7 zinc finger occupies His-616–His-638. Basic residues predominate over residues Thr-651–Val-662.

The protein belongs to the krueppel C2H2-type zinc-finger protein family.

Its subcellular location is the nucleus. Functionally, may be involved in transcriptional regulation. The chain is Zinc finger protein 800 (Znf800) from Mus musculus (Mouse).